The sequence spans 130 residues: Small ribosomal subunit protein uS9 (130 aa).

This sequence belongs to the universal ribosomal protein uS9 family.

In Pseudomonas entomophila (strain L48), this protein is Small ribosomal subunit protein uS9.